The following is a 423-amino-acid chain: p-aminobenzoyl-glutamate hydrolase subunit A homolog (423 aa).

The protein belongs to the peptidase M20 family. It depends on Mn(2+) as a cofactor.

Catalyzes the cleavage of p-aminobenzoyl-glutamate (PABA-GLU) to form p-aminobenzoate (PABA) and glutamate. The chain is p-aminobenzoyl-glutamate hydrolase subunit A homolog (abgA) from Haemophilus influenzae (strain ATCC 51907 / DSM 11121 / KW20 / Rd).